The primary structure comprises 2113 residues: Ninein (2113 aa).

2 EF-hand domains span residues Gln-8–Glu-43 and Leu-42–Arg-77. Position 152 is a phosphoserine (Ser-152). EF-hand domains lie at Trp-182–Gln-217 and Val-219–Ser-252. Gly-245–Ser-252 lines the GTP pocket. At Ser-269 the chain carries Phosphoserine. Asp-300 to Gln-304 serves as a coordination point for GTP. The region spanning Glu-317–Val-352 is the EF-hand 5 domain. A coiled-coil region spans residues His-358 to Leu-570. GTP is bound at residue Arg-420–Asp-423. The segment at Glu-578 to Asn-599 is disordered. Coiled coils occupy residues Arg-620–His-926, Glu-958–Ile-1008, Glu-1175–Val-1323, and Ala-1425–Asp-1806. Residues Glu-798–Met-1495 are important for interaction with CEP170. Phosphoserine occurs at positions 1540 and 1826. 2 coiled-coil regions span residues Val-1852 to Ser-1910 and Arg-1971 to Leu-2093. Disordered stretches follow at residues Lys-1899–Leu-1922 and Ser-1988–Asn-2008. The span at Ser-1988–Thr-1999 shows a compositional bias: basic and acidic residues.

In terms of assembly, homooligomer. Interacts with GSK3B/GSK3-beta via its C-terminal domain. Interacts with C14ORF166, such interaction may prevent its phosphorylation by GSK3B. Interacts with AUNIP (via N-terminus). Identified in a complex with AUNIP and AURKA. Interacts with CCDC120. Interacts (via C-terminus) with CEP250. Interacts with CEP170. Interacts (via N-terminus) with the gamma-tubulin ring complex component TUBGCP3. Interacts with gamma-tubulin. Isoform 4 does not interact with CEP170 or CEP250. In terms of processing, phosphorylated by AURKA/Aurora kinase A and PKA kinases but not CK2 or AURKB/Aurora kinase B. Widely expressed. Highly expressed in spleen, bone marrow and skin. Weakly expressed in liver and small intestine. Expressed in brain.

Its subcellular location is the cytoplasm. The protein localises to the cytoskeleton. It is found in the microtubule organizing center. The protein resides in the centrosome. It localises to the centriole. Its function is as follows. Centrosomal protein required for the positioning and anchorage of the microtubule minus-end in epithelial cells. May also act as a centrosome maturation factor. May play a role in microtubule nucleation, by recruiting the gamma-tubulin ring complex to the centrosome. Overexpression does not perturb nucleation or elongation of microtubules but suppresses release of microtubules. Required for centriole organization and microtubule anchoring at the mother centriole. The polypeptide is Ninein (Mus musculus (Mouse)).